The sequence spans 546 residues: Calnexin homolog (546 aa).

The N-terminal stretch at 1-25 (MGERKGIPMALGLLAMILFFIASSS) is a signal peptide. Over 26 to 475 (SHLVRASDDA…EKAEKQPNLT (450 aa)) the chain is Lumenal. The Ca(2+) site is built by serine 43 and aspartate 74. A disulfide bridge connects residues cysteine 117 and cysteine 152. An alpha-D-glucoside contacts are provided by tyrosine 121, lysine 123, tyrosine 143, and aspartate 150. The tract at residues 217 to 329 (LSSEDFEPPL…PGCGEWKRPT (113 aa)) is disordered. The tract at residues 232–365 (IPDPDDKKPE…REIPNPEYFE (134 aa)) is p domain (Extended arm). Residues 233 to 249 (PDPDDKKPEDWDERAKI) are compositionally biased toward basic and acidic residues. Repeat copies occupy residues 234–245 (DPDDKKPEDWDE), 251–262 (DPSAVKPDDWDE), 270–281 (DEEAEKPEGWLD), 289–300 (DPEATKPEDWDD), and 304–314 (GEWEAPKIENP). 4 X approximate repeats stretches follow at residues 234–300 (DPDD…DWDD) and 304–361 (GEWE…IPNP). Acidic residues-rich tracts occupy residues 259–290 (DWDE…IDDP) and 297–306 (DWDDEEDGEW). Residues cysteine 316 and cysteine 322 are joined by a disulfide bond. 3 repeat units span residues 323-333 (GEWKRPTKRNP), 337-347 (GKWSAPYIDNP), and 351-361 (GIWKPREIPNP). Glutamate 380 is an an alpha-D-glucoside binding site. Ca(2+) is bound at residue aspartate 391. The N-linked (GlcNAc...) asparagine glycan is linked to asparagine 473. A helical membrane pass occupies residues 476–496 (IGILVAVVVVFVSIFFRLIFG). At 497 to 546 (GKKPAKVEKKPERTEASNNQGSGENEENKEKEKQKEEASNAARRRPRRET) the chain is on the cytoplasmic side. Basic and acidic residues-rich tracts occupy residues 501–511 (AKVEKKPERTE) and 522–534 (EENK…KEEA). Residues 501–546 (AKVEKKPERTEASNNQGSGENEENKEKEKQKEEASNAARRRPRRET) form a disordered region.

Belongs to the calreticulin family.

The protein localises to the endoplasmic reticulum membrane. Calcium-binding protein that interacts with newly synthesized monoglucosylated glycoproteins in the endoplasmic reticulum. It may act in assisting protein assembly and/or in the retention within the ER of unassembled protein subunits. It seems to play a major role in the quality control apparatus of the ER by the retention of incorrectly folded proteins. The polypeptide is Calnexin homolog (Glycine max (Soybean)).